The chain runs to 352 residues: Pyruvate dehydrogenase E1 component subunit beta, mitochondrial (352 aa).

The N-terminal 21 residues, 1-21 (MALRKCGNLFVARLAGTSTRA), are a transit peptide targeting the mitochondrion. Glu81 lines the thiamine diphosphate pocket. 5 residues coordinate K(+): Ile134, Ala182, Ile183, Asp185, and Asn187.

As to quaternary structure, tetramer of 2 alpha and 2 beta subunits. The cofactor is thiamine diphosphate.

The protein localises to the mitochondrion matrix. It catalyses the reaction N(6)-[(R)-lipoyl]-L-lysyl-[protein] + pyruvate + H(+) = N(6)-[(R)-S(8)-acetyldihydrolipoyl]-L-lysyl-[protein] + CO2. Functionally, the pyruvate dehydrogenase complex catalyzes the overall conversion of pyruvate to acetyl-CoA and CO(2). It contains multiple copies of three enzymatic components: pyruvate dehydrogenase (E1), dihydrolipoamide acetyltransferase (E2) and lipoamide dehydrogenase (E3). The protein is Pyruvate dehydrogenase E1 component subunit beta, mitochondrial (pdhb-1) of Caenorhabditis elegans.